The chain runs to 412 residues: D-nopaline dehydrogenase (412 aa).

Belongs to the lysopine/nopaline/octopine/opine/vitopine dehydrogenases family. Homotetramer.

It carries out the reaction D-nopaline + NADP(+) + H2O = L-arginine + 2-oxoglutarate + NADPH + H(+). This is D-nopaline dehydrogenase (nos) from Agrobacterium vitis (Rhizobium vitis).